The primary structure comprises 1080 residues: Origin recognition complex subunit 3 (1080 aa).

Disordered regions lie at residues 92–112, 566–701, and 869–902; these read YGIS…DDSS, TIKL…PKRI, and IKNE…ENEQ. A compositionally biased stretch (basic and acidic residues) spans 651 to 661; the sequence is IKSDLECNDND. Residues 662-671 are compositionally biased toward acidic residues; that stretch reads KDNDDNDNDI. Low complexity-rich tracts occupy residues 672–688 and 875–896; these read NENN…NSNN and QQQQ…QQQQ.

This sequence belongs to the ORC3 family. As to quaternary structure, ORC is composed of six subunits.

The protein localises to the nucleus. In terms of biological role, component of the origin recognition complex (ORC) that binds origins of replication. DNA-binding is ATP-dependent, however specific DNA sequences that define origins of replication have not been identified so far. ORC is required to assemble the pre-replication complex necessary to initiate DNA replication. This is Origin recognition complex subunit 3 (orcC) from Dictyostelium discoideum (Social amoeba).